The sequence spans 349 residues: Homeobox-leucine zipper protein HOX7 (349 aa).

The interval 42–186 is disordered; sequence RATRRDEQDD…PKQKSDLANR (145 aa). Polar residues-rich tracts occupy residues 89–99 and 121–135; these read SAETGSANSEM and SSPSSMQEASTRQQV. A DNA-binding region (homeobox) is located at residues 150 to 209; it reads GARKKLRLSKEQSSFLEDSFKEHSTLTPKQKSDLANRLNLRPRQVEVWFQNRRARTKLKQ. Positions 167-183 are enriched in basic and acidic residues; it reads DSFKEHSTLTPKQKSDL. A leucine-zipper region spans residues 208-252; the sequence is KQTEVDCEHLKRCCERLTRENRRLQREVAELRGALRTTTSSYPPL.

The protein belongs to the HD-ZIP homeobox family. Class II subfamily. Homodimer. May form a heterodimer with HOX1, HOX2 or HOX3. Expressed in seedlings, roots, leaves, nodes, internodes, flowers and embryo.

It is found in the nucleus. Probable transcription factor that binds to the DNA sequence 5'-CAAT[GC]ATTG-3'. The chain is Homeobox-leucine zipper protein HOX7 (HOX7) from Oryza sativa subsp. indica (Rice).